A 102-amino-acid chain; its full sequence is Large ribosomal subunit protein bL28 (102 aa).

The tract at residues M1–H20 is disordered.

This sequence belongs to the bacterial ribosomal protein bL28 family.

The polypeptide is Large ribosomal subunit protein bL28 (Bradyrhizobium sp. (strain ORS 278)).